A 541-amino-acid polypeptide reads, in one-letter code: MCCSERLLGLPQPVEMEAPDEAEGLPSKQKEMPPPPPPSPPSEPAQKLPPQGAGSHSLTVRSSLCLFAASQFLLACGVLWLSGHGHSWLQNTTDLISSSLTVLNHLGPVAWLGSGTWGIPSLLLVSLTVSLVIVTTLVWHLLKAPPEPPAPLPPEDRRQSVSRQPSFTYSEWMEEKVEDDFLDLDAVPETPVFDCVMDIKPETDPASLTVKSMGLQERRGSNVSLTLDMCTPGCNEEGFGYLVSPREESAHEYLLSASRVLRAEELHEKALDPFLLQAEFFEIPMNFVDPKEYDIPGLVRKNRYKTILPNPHSRVRLTSPDPEDPLSSYINANYIRGYSGEEKVYIATQGPIVSTVADFWRMVWQERTPIIVMITNIEEMNEKCTEYWPEEQVVHDGVEITVQKVIHTEDYRLRLISLRRGTEERSLKHYWFTSWPDQKTPDRAPPLLHLVREVEEAAQQEGPHCSPIIVHCSAGIGRTGCFIATSICCQQLRREGVVDILKTTCQLRQDRGGMIQTCEQYQFVHHAMSLYEKQLSLQSSE.

The tract at residues 1-55 (MCCSERLLGLPQPVEMEAPDEAEGLPSKQKEMPPPPPPSPPSEPAQKLPPQGAGS) is disordered. Residues 32–43 (MPPPPPPSPPSE) are compositionally biased toward pro residues. Helical transmembrane passes span 64 to 84 (LCLF…LSGH) and 122 to 142 (LLLV…WHLL). At Ser221 the chain carries Phosphoserine; by PKA. Thr231 is modified (phosphothreonine; by MAPK). Residue Ser244 is modified to Phosphoserine; by MAPK. Residues 276 to 531 (LQAEFFEIPM…QFVHHAMSLY (256 aa)) enclose the Tyrosine-protein phosphatase domain. Substrate contacts are provided by residues Asp437, 472 to 478 (CSAGIGR), and Gln516. Cys472 acts as the Phosphocysteine intermediate in catalysis.

This sequence belongs to the protein-tyrosine phosphatase family. Non-receptor class subfamily. Post-translationally, phosphorylation at Ser-221 by PKA deactivates PTPN5. Phosphorylation at Thr-231 and Ser-244 by MAPKs stabilizes the phosphatase, dephosphorylation of these sites results in ubiquitin-mediated degradation of the active phosphatase. In terms of tissue distribution, STEP20 is expressed only in the CNS.

The protein resides in the endoplasmic reticulum membrane. The protein localises to the cytoplasm. The enzyme catalyses O-phospho-L-tyrosyl-[protein] + H2O = L-tyrosyl-[protein] + phosphate. In terms of biological role, may regulate the activity of several effector molecules involved in synaptic plasticity and neuronal cell survival, including MAPKs, Src family kinases and NMDA receptors. This is Tyrosine-protein phosphatase non-receptor type 5 (Ptpn5) from Mus musculus (Mouse).